Here is a 372-residue protein sequence, read N- to C-terminus: PqqA peptide cyclase (372 aa).

The Radical SAM core domain occupies 4–220 (APPPLSVLLE…ETARRQLGDR (217 aa)). Cys18, Cys22, and Cys25 together coordinate [4Fe-4S] cluster. The segment at 342 to 372 (ATAEQESASPAPAFIYRRPERPAAATADPLE) is disordered.

This sequence belongs to the radical SAM superfamily. PqqE family. As to quaternary structure, interacts with PqqD. The interaction is necessary for activity of PqqE. [4Fe-4S] cluster is required as a cofactor.

The enzyme catalyses [PQQ precursor protein] + S-adenosyl-L-methionine = E-Y cross-linked-[PQQ precursor protein] + 5'-deoxyadenosine + L-methionine + H(+). Its pathway is cofactor biosynthesis; pyrroloquinoline quinone biosynthesis. Its function is as follows. Catalyzes the cross-linking of a glutamate residue and a tyrosine residue in the PqqA protein as part of the biosynthesis of pyrroloquinoline quinone (PQQ). The sequence is that of PqqA peptide cyclase from Xanthomonas euvesicatoria pv. vesicatoria (strain 85-10) (Xanthomonas campestris pv. vesicatoria).